Here is a 343-residue protein sequence, read N- to C-terminus: Photosystem II protein D1 (343 aa).

3 helical membrane-spanning segments follow: residues 28-45 (YIGW…VSTV), 117-132 (HFLA…EYEY), and 141-155 (WIYL…AASA). A chlorophyll a-binding site is contributed by histidine 117. Tryptophan 125 contacts pheophytin a. 2 residues coordinate [CaMn4O5] cluster: aspartate 169 and glutamate 188. The helical transmembrane segment at 196–217 (FHILGVSAVFGGSLFSAMHGSL) threads the bilayer. Histidine 197 provides a ligand contact to chlorophyll a. A quinone contacts are provided by residues histidine 214 and 263–264 (SF). Histidine 214 contributes to the Fe cation binding site. Histidine 271 lines the Fe cation pocket. A helical membrane pass occupies residues 273-287 (FLAAWPVIGIWCTAI). [CaMn4O5] cluster-binding residues include histidine 331, glutamate 332, aspartate 341, and alanine 343.

Belongs to the reaction center PufL/M/PsbA/D family. As to quaternary structure, PSII is composed of 1 copy each of membrane proteins PsbA, PsbB, PsbC, PsbD, PsbE, PsbF, PsbH, PsbI, PsbJ, PsbK, PsbL, PsbM, PsbT, PsbX, PsbY, PsbZ, Psb30/Ycf12, at least 3 peripheral proteins of the oxygen-evolving complex and a large number of cofactors. It forms dimeric complexes. Requires The D1/D2 heterodimer binds P680, chlorophylls that are the primary electron donor of PSII, and subsequent electron acceptors. It shares a non-heme iron and each subunit binds pheophytin, quinone, additional chlorophylls, carotenoids and lipids. D1 provides most of the ligands for the Mn4-Ca-O5 cluster of the oxygen-evolving complex (OEC). There is also a Cl(-1) ion associated with D1 and D2, which is required for oxygen evolution. The PSII complex binds additional chlorophylls, carotenoids and specific lipids. as cofactor. In terms of processing, tyr-160 forms a radical intermediate that is referred to as redox-active TyrZ, YZ or Y-Z.

It is found in the plastid. Its subcellular location is the chloroplast thylakoid membrane. The catalysed reaction is 2 a plastoquinone + 4 hnu + 2 H2O = 2 a plastoquinol + O2. In terms of biological role, photosystem II (PSII) is a light-driven water:plastoquinone oxidoreductase that uses light energy to abstract electrons from H(2)O, generating O(2) and a proton gradient subsequently used for ATP formation. It consists of a core antenna complex that captures photons, and an electron transfer chain that converts photonic excitation into a charge separation. The D1/D2 (PsbA/PsbD) reaction center heterodimer binds P680, the primary electron donor of PSII as well as several subsequent electron acceptors. This is Photosystem II protein D1 from Prorocentrum micans (Red tide dinoflagellate).